A 587-amino-acid polypeptide reads, in one-letter code: Beta-(1--&gt;2)glucan export ATP-binding/permease protein NdvA (587 aa).

The ABC transmembrane type-1 domain occupies 21–301 (VSLVVIANIV…MRQFATQIFE (281 aa)). 6 consecutive transmembrane segments (helical) span residues 23–43 (LVVI…ILFG), 57–77 (PILF…VLVS), 126–146 (LFGL…ALAL), 158–178 (LSAV…VVMS), 248–268 (MAST…VQSG), and 272–292 (IGDV…LDLM). The 235-residue stretch at 335–569 (IEFRDVSFGF…NGRFAALLRA (235 aa)) folds into the ABC transporter domain. 368–375 (GPTGAGKT) provides a ligand contact to ATP.

The protein belongs to the ABC transporter superfamily. Beta-(1--&gt;2)glucan exporter (TC 3.A.1.108.1) family. In terms of assembly, homodimer.

It localises to the cell inner membrane. The enzyme catalyses [(1-&gt;2)-beta-D-glucosyl](n)(in) + ATP + H2O = [(1-&gt;2)-beta-D-glucosyl](n)(out) + ADP + phosphate + H(+). Functionally, involved in beta-(1--&gt;2)glucan export. Transmembrane domains (TMD) form a pore in the inner membrane and the ATP-binding domain (NBD) is responsible for energy generation. The chain is Beta-(1--&gt;2)glucan export ATP-binding/permease protein NdvA from Rhizobium etli (strain ATCC 51251 / DSM 11541 / JCM 21823 / NBRC 15573 / CFN 42).